The sequence spans 807 residues: MQFFGRLVNTLSSVTNLFSNPFRVKEVSLADYASSERVREEGQLILLQNASNRTWDCVLVSPRNPQSGFRLFQLESEADALVNFQQYSSQLPPFYESSVQVLHVEVLQHLTDLIRNHPSWTVTHLAVELGIRECFHHSRIISCANSTENEEGCTPLHLACRKGDSEILVELVQYCHAQMDVTDNKGETAFHYAVQGDNPQVLQLLGKNASAGLNQVNNQGLTPLHLACQMGKQEMVRVLLLCNARCNIMGPGGFPIHTAMKFSQKGCAEMIISMDSNQIHSKDPRYGASPLHWAKNAEMARMLLKRGCDVDSTSASGNTALHVAVTRNRFDCVMVLLTYGANAGARGEHGNTPLHLAMSKDNMEMVKALIVFGAEVDTPNDFGETPAFIASKISKLITRKALLTLLKTVGADYHFPFIQGVSTEQSSAAGPHPFFSLDRTQPPTISLNNLELQDLMPVSRARKPAFILSSMRDEKRSHDHLLCLDGGGVKGLVIIQLLIAIEKASGVATKDLFDWVAGTSTGGILALAILHSKSMAYMRGVYFRMKDEVFRGSRPYESGPLEEFLKREFGEHTKMTDVKKPKVMLTGTLSDRQPAELHLFRNYDAPEAVREPRCTPNINLKPPTQPADQLVWRAARSSGAAPTYFRPNGRFLDGGLLANNPTLDAMTEIHEYNQDMIRKGQGNKVKKLSIVVSLGTGKSPQVPVTCVDVFRPSNPWELAKTVFGAKELGKMVVDCCTDPDGRAVDRARAWCEMVGIQYFRLNPQLGSDIMLDEVSDAVLVNALWETEVYIYEHREEFQKLVQLLLSP.

Ser13 is subject to Phosphoserine. 9 ANK repeats span residues 120–147 (WTVT…ANST), 151–181 (EGCT…QMDV), 185–215 (KGET…GLNQ), 219–248 (QGLT…RCNI), 251–281 (PGGF…QIHS), 286–312 (YGAS…DVDS), 316–345 (SGNT…NAGA), 349–378 (HGNT…EVDT), and 382–403 (FGET…KALL). A run of 2 helical transmembrane segments spans residues 481 to 501 (LLCL…LIAI) and 512 to 532 (LFDW…ILHS). The PNPLA domain maps to 482–666 (LCLDGGGVKG…LANNPTLDAM (185 aa)). The GXGXXG signature appears at 486–491 (GGGVKG). The GXSXG motif lies at 518 to 522 (GTSTG). Catalysis depends on Ser520, which acts as the Nucleophile. Asp653 (proton acceptor) is an active-site residue. Residues 653 to 655 (DGG) carry the DGA/G motif. Residues 678-687 (RKGQGNKVKK) form a calmodulin-binding (1-9-14 motif) region. The interval 749–760 (AWCEMVGIQYFR) is calmodulin-binding (IQ motif).

In terms of assembly, homodimer formed by catalytic domains tightly interacting through a large hydrophobic interface. The contact area involves 3 alpha helices, several loops and a part of the beta sheet from each monomer. Both active sites of the dimer are in close proximity adopting an open conformation that provide sufficient space for phospholipid access and favoring cooperativity in deacylation-reacylation reactions. Each monomer has 9 ankyrin repeats stacked side-by-side in an elongated structure oriented outwards from the catalytic core. In terms of tissue distribution, expressed in pancreatic beta-cells. Expressed in skeletal muscle (at protein level).

Its subcellular location is the cytoplasm. It is found in the cell membrane. It localises to the mitochondrion. The protein resides in the cell projection. The protein localises to the pseudopodium. The enzyme catalyses a 1,2-diacyl-sn-glycero-3-phosphocholine + H2O = a 1-acyl-sn-glycero-3-phosphocholine + a fatty acid + H(+). It catalyses the reaction a 1-O-alkyl-2-acyl-sn-glycero-3-phosphocholine + H2O = a 1-O-alkyl-sn-glycero-3-phosphocholine + a fatty acid + H(+). It carries out the reaction 1,2-dihexadecanoyl-sn-glycero-3-phosphocholine + H2O = 1-hexadecanoyl-sn-glycero-3-phosphocholine + hexadecanoate + H(+). The catalysed reaction is 1-hexadecanoyl-2-(9Z-octadecenoyl)-sn-glycero-3-phosphocholine + H2O = 1-hexadecanoyl-sn-glycero-3-phosphocholine + (9Z)-octadecenoate + H(+). The enzyme catalyses 1-hexadecanoyl-2-(9Z,12Z-octadecadienoyl)-sn-glycero-3-phosphocholine + H2O = (9Z,12Z)-octadecadienoate + 1-hexadecanoyl-sn-glycero-3-phosphocholine + H(+). It catalyses the reaction 1-hexadecanoyl-2-(5Z,8Z,11Z,14Z-eicosatetraenoyl)-sn-glycero-3-phosphocholine + H2O = 1-hexadecanoyl-sn-glycero-3-phosphocholine + (5Z,8Z,11Z,14Z)-eicosatetraenoate + H(+). It carries out the reaction 1-octadecanoyl-2-(5Z,8Z,11Z,14Z-eicosatetraenoyl)-sn-glycero-3-phosphocholine + H2O = 1-octadecanoyl-sn-glycero-3-phosphocholine + (5Z,8Z,11Z,14Z)-eicosatetraenoate + H(+). The catalysed reaction is 1-hexadecanoyl-2-(5Z,8Z,11Z,14Z-eicosatetraenoyl)-sn-glycero-3-phosphoethanolamine + H2O = 1-hexadecanoyl-sn-glycero-3-phosphoethanolamine + (5Z,8Z,11Z,14Z)-eicosatetraenoate + H(+). The enzyme catalyses 1,2-dihexadecanoyl-sn-glycero-3-phosphate + H2O = 1-hexadecanoyl-sn-glycero-3-phosphate + hexadecanoate + H(+). It catalyses the reaction a 1-acyl-sn-glycero-3-phosphocholine + H2O = sn-glycerol 3-phosphocholine + a fatty acid + H(+). It carries out the reaction 1-hexadecanoyl-sn-glycero-3-phosphocholine + H2O = sn-glycerol 3-phosphocholine + hexadecanoate + H(+). The catalysed reaction is 1-(5Z,8Z,11Z,14Z-eicosatetraenoyl)-sn-glycero-3-phosphocholine + H2O = sn-glycerol 3-phosphocholine + (5Z,8Z,11Z,14Z)-eicosatetraenoate + H(+). The enzyme catalyses 2-(5Z,8Z,11Z,14Z)-eicosatetraenoyl-sn-glycero-3-phosphocholine + H2O = sn-glycerol 3-phosphocholine + (5Z,8Z,11Z,14Z)-eicosatetraenoate + H(+). It catalyses the reaction 1-O-hexadecyl-2-(5Z,8Z,11Z,14Z)-eicosatetraenoyl-sn-glycero-3-phosphocholine + H2O = 1-O-hexadecyl-sn-glycero-3-phosphocholine + (5Z,8Z,11Z,14Z)-eicosatetraenoate + H(+). It carries out the reaction 1-O-hexadecyl-2-acetyl-sn-glycero-3-phosphocholine + H2O = 1-O-hexadecyl-sn-glycero-3-phosphocholine + acetate + H(+). The catalysed reaction is hexadecanoyl-CoA + H2O = hexadecanoate + CoA + H(+). The enzyme catalyses 1',3'-bis[1,2-di-(9Z-octadecenoyl)-sn-glycero-3-phospho]-glycerol + H2O = 1'-[1,2-di-(9Z-octadecenoyl)-sn-glycero-3-phospho]-3'-[1-(9Z-octadecenoyl)-sn-glycero-3-phospho]-glycerol + (9Z)-octadecenoate + H(+). It catalyses the reaction 1'-[1,2-di-(9Z-octadecenoyl)-sn-glycero-3-phospho]-3'-[1-(9Z-octadecenoyl)-sn-glycero-3-phospho]-glycerol + H2O = 1',3'-bis-[1-(9Z-octadecenoyl)-sn-glycero-3-phospho]-glycerol + (9Z)-octadecenoate + H(+). It carries out the reaction 1',3'-bis-[1,2-di-(9Z,12Z-octadecadienoyl)-sn-glycero-3-phospho]-glycerol + H2O = 1'-[1,2-di-(9Z,12Z-octadecadienoyl)-sn-glycero-3-phospho]-3'-[1-(9Z,12Z-octadecadienoyl)-sn-glycero-3-phospho]-glycerol + (9Z,12Z)-octadecadienoate + H(+). The catalysed reaction is 1-octadecanoyl-2-(15-hydroxy-(5Z,8Z,11Z,13E)-eicosatetraenoyl)-sn-glycero-3-phosphoethanolamine + H2O = 1-octadecanoyl-sn-glycero-3-phosphoethanolamine + 15-hydroxy-(5Z,8Z,11Z,13E)-eicosatetraenoate + H(+). Activated by ATP. Inhibited by calcium-activated calmodulin. Inhibited by bromoenol lactone (BEL). In terms of biological role, calcium-independent phospholipase involved in phospholipid remodeling with implications in cellular membrane homeostasis, mitochondrial integrity and signal transduction. Hydrolyzes the ester bond of the fatty acyl group attached at sn-1 or sn-2 position of phospholipids (phospholipase A1 and A2 activity respectively), producing lysophospholipids that are used in deacylation-reacylation cycles. Hydrolyzes both saturated and unsaturated long fatty acyl chains in various glycerophospholipid classes such as phosphatidylcholines, phosphatidylethanolamines and phosphatidates, with a preference for hydrolysis at sn-2 position. Can further hydrolyze lysophospholipids carrying saturated fatty acyl chains (lysophospholipase activity). Upon oxidative stress, contributes to remodeling of mitochondrial phospholipids in pancreatic beta cells, in a repair mechanism to reduce oxidized lipid content. Preferentially hydrolyzes oxidized polyunsaturated fatty acyl chains from cardiolipins, yielding monolysocardiolipins that can be reacylated with unoxidized fatty acyls to regenerate native cardiolipin species. Hydrolyzes oxidized glycerophosphoethanolamines present in pancreatic islets, releasing oxidized polyunsaturated fatty acids such as hydroxyeicosatetraenoates (HETEs). Has thioesterase activity toward fatty-acyl CoA releasing CoA-SH known to facilitate fatty acid transport and beta-oxidation in mitochondria particularly in skeletal muscle. Plays a role in regulation of membrane dynamics and homeostasis. Selectively hydrolyzes sn-2 arachidonoyl group in plasmalogen phospholipids, structural components of lipid rafts and myelin. Regulates F-actin polymerization at the pseudopods, which is required for both speed and directionality of MCP1/CCL2-induced monocyte chemotaxis. Targets membrane phospholipids to produce potent lipid signaling messengers. Generates lysophosphatidate (LPA, 1-acyl-glycerol-3-phosphate), which acts via G-protein receptors in various cell types. Has phospholipase A2 activity toward platelet-activating factor (PAF, 1-O-alkyl-2-acetyl-sn-glycero-3-phosphocholine), likely playing a role in inactivation of this potent pro-inflammatory signaling lipid. In response to glucose, amplifies calcium influx in pancreatic beta cells to promote INS secretion. The sequence is that of 85/88 kDa calcium-independent phospholipase A2 (Pla2g6) from Rattus norvegicus (Rat).